The chain runs to 345 residues: Histidinol-phosphate aminotransferase (345 aa).

K205 carries the N6-(pyridoxal phosphate)lysine modification.

The protein belongs to the class-II pyridoxal-phosphate-dependent aminotransferase family. Histidinol-phosphate aminotransferase subfamily. In terms of assembly, homodimer. The cofactor is pyridoxal 5'-phosphate.

The catalysed reaction is L-histidinol phosphate + 2-oxoglutarate = 3-(imidazol-4-yl)-2-oxopropyl phosphate + L-glutamate. It functions in the pathway amino-acid biosynthesis; L-histidine biosynthesis; L-histidine from 5-phospho-alpha-D-ribose 1-diphosphate: step 7/9. The polypeptide is Histidinol-phosphate aminotransferase (Parabacteroides distasonis (strain ATCC 8503 / DSM 20701 / CIP 104284 / JCM 5825 / NCTC 11152)).